Here is a 419-residue protein sequence, read N- to C-terminus: Vascular endothelial growth factor C (419 aa).

The first 31 residues, 1-31 (MHLLGFFSVACSLLAAALLPGPREAPAAAAA), serve as a signal peptide directing secretion. A propeptide spans 32-111 (FESGLDLSDA…RTEETIKFAA (80 aa)) (or 102). Intrachain disulfides connect Cys131/Cys173, Cys162/Cys209, and Cys166/Cys211. N-linked (GlcNAc...) asparagine glycans are attached at residues Asn175, Asn205, and Asn240. The propeptide occupies 228–419 (SLPATLPQCQ…PSYWKRPQMS (192 aa)). Repeat copies occupy residues 280–295 (CGPNKELDEETCQCVC), 304–319 (CGPHKELDRNSCQCVC), 328–343 (CGANREFDENTCQCVC), and 347–362 (CPRNQPLNPGKCACEC). Residues 280–362 (CGPNKELDEE…LNPGKCACEC (83 aa)) form a 4 X 16 AA repeats of C-X(10)-C-X-C-X(1,3)-C region.

The protein belongs to the PDGF/VEGF growth factor family. Homodimer; non-covalent and antiparallel. Interacts with FLT4/VEGFR3; the interaction is required for FLT4/VEGFR3 homodimarization and activation. Post-translationally, undergoes a complex proteolytic maturation which generates a variety of processed secreted forms with increased activity toward VEGFR-3, but only the fully processed form could activate VEGFR-2. VEGF-C first form an antiparallel homodimer linked by disulfide bonds. Before secretion, a cleavage occurs between Arg-227 and Ser-228 producing a heterotetramer. The next extracellular step of the processing removes the N-terminal propeptide. Finally the mature VEGF-C is composed mostly of two VEGF homology domains (VHDs) bound by non-covalent interactions. As to expression, expressed in the spleen. Expressed in the lymph node, thymus, appendix and bone marrow. Expressed in the heart, placenta, skeletal muscle, ovary and small intestine. Expressed in the prostate, testis and colon.

The protein resides in the secreted. Growth factor active in angiogenesis, and endothelial cell growth, stimulating their proliferation and migration and also has effects on the permeability of blood vessels. May function in angiogenesis of the venous and lymphatic vascular systems during embryogenesis, and also in the maintenance of differentiated lymphatic endothelium in adults. Binds and activates KDR/VEGFR2 and FLT4/VEGFR3 receptors. This is Vascular endothelial growth factor C (VEGFC) from Homo sapiens (Human).